The chain runs to 676 residues: Probable ERAD-associated E3 ubiquitin-protein ligase ASI1 (676 aa).

Topologically, residues M1–R78 are perinuclear space. N-linked (GlcNAc...) asparagine glycans are attached at residues N24, N34, N46, and N66. The chain crosses the membrane as a helical span at residues M79–L99. The Nuclear portion of the chain corresponds to N100 to H126. A helical transmembrane segment spans residues L127–M147. Residues H148–D156 are Perinuclear space-facing. A helical membrane pass occupies residues F157–S177. Residues S178–N181 are Nuclear-facing. The chain crosses the membrane as a helical span at residues V182 to I202. Residues S203–P277 are Perinuclear space-facing. Residues G278–F298 traverse the membrane as a helical segment. Residues T299–V676 lie on the Nuclear side of the membrane. An RING-type; atypical zinc finger spans residues C624–D664.

Component of the Asi complex, which contains ASI1, ASI2 and ASI3. Interacts directly with ASI1.

Its subcellular location is the nucleus inner membrane. The catalysed reaction is S-ubiquitinyl-[E2 ubiquitin-conjugating enzyme]-L-cysteine + [acceptor protein]-L-lysine = [E2 ubiquitin-conjugating enzyme]-L-cysteine + N(6)-ubiquitinyl-[acceptor protein]-L-lysine.. Part of the nuclear inner membrane (INM)-specific branch of the ER-associated degradation (ERAD) pathway, required for the elimination of misfolded proteins in the INM, a specialized ER subdomain. Required for ERG11 degradation. Negative regulator of SPS-sensor signaling. Together with ASI2 and ASI3, prevents the unprocessed precursor forms of STP1 and STP2 that escape cytoplasmic anchoring from inducing SPS-sensor-regulated genes in the absence of inducing signals. Controls amino acid permease (AAP) gene expression in response to amino acid availability, a process mediated by the transcription factors STP1 and STP1. The sequence is that of Probable ERAD-associated E3 ubiquitin-protein ligase ASI1 (ASI3) from Saccharomyces cerevisiae (strain ATCC 204508 / S288c) (Baker's yeast).